Reading from the N-terminus, the 627-residue chain is Hemocyanin D chain (627 aa).

Cu cation contacts are provided by H171, H175, H202, H322, H326, and H362. The N-linked (GlcNAc...) asparagine glycan is linked to N445. An intrachain disulfide couples C531 to C579.

This sequence belongs to the tyrosinase family. Hemocyanin subfamily. As to quaternary structure, tarantula hemocyanin is a 24-chain polymer with seven different chains identified. In terms of tissue distribution, hemolymph.

The protein resides in the secreted. Its subcellular location is the extracellular space. In terms of biological role, hemocyanins are copper-containing oxygen carriers occurring freely dissolved in the hemolymph of many mollusks and arthropods. The polypeptide is Hemocyanin D chain (HCD) (Aphonopelma sp. (American tarantula)).